The primary structure comprises 870 residues: DNA mismatch repair protein MutS (870 aa).

Residue 622 to 629 (GPNMGGKS) participates in ATP binding.

Belongs to the DNA mismatch repair MutS family.

This protein is involved in the repair of mismatches in DNA. It is possible that it carries out the mismatch recognition step. This protein has a weak ATPase activity. The chain is DNA mismatch repair protein MutS from Methylibium petroleiphilum (strain ATCC BAA-1232 / LMG 22953 / PM1).